A 355-amino-acid chain; its full sequence is UDP-N-acetylglucosamine--N-acetylmuramyl-(pentapeptide) pyrophosphoryl-undecaprenol N-acetylglucosamine transferase (355 aa).

Residues Thr14–Gly16, Asn126, Arg162, Ser190, Ile243, Ala262–Glu267, and Gln287 each bind UDP-N-acetyl-alpha-D-glucosamine.

It belongs to the glycosyltransferase 28 family. MurG subfamily.

The protein localises to the cell inner membrane. It catalyses the reaction di-trans,octa-cis-undecaprenyl diphospho-N-acetyl-alpha-D-muramoyl-L-alanyl-D-glutamyl-meso-2,6-diaminopimeloyl-D-alanyl-D-alanine + UDP-N-acetyl-alpha-D-glucosamine = di-trans,octa-cis-undecaprenyl diphospho-[N-acetyl-alpha-D-glucosaminyl-(1-&gt;4)]-N-acetyl-alpha-D-muramoyl-L-alanyl-D-glutamyl-meso-2,6-diaminopimeloyl-D-alanyl-D-alanine + UDP + H(+). Its pathway is cell wall biogenesis; peptidoglycan biosynthesis. In terms of biological role, cell wall formation. Catalyzes the transfer of a GlcNAc subunit on undecaprenyl-pyrophosphoryl-MurNAc-pentapeptide (lipid intermediate I) to form undecaprenyl-pyrophosphoryl-MurNAc-(pentapeptide)GlcNAc (lipid intermediate II). This is UDP-N-acetylglucosamine--N-acetylmuramyl-(pentapeptide) pyrophosphoryl-undecaprenol N-acetylglucosamine transferase from Vibrio parahaemolyticus serotype O3:K6 (strain RIMD 2210633).